Consider the following 734-residue polypeptide: Myb-like protein J (734 aa).

3 disordered regions span residues 1–35, 128–196, and 221–378; these read MPNNQQNQIESPSKNTSNVGGSTLLNNNSPPFKSN, QKDQ…PTMM, and SPIS…LKQG. The segment covering 131–142 has biased composition (basic and acidic residues); it reads QQQKEQQKEQQK. A compositionally biased stretch (low complexity) spans 164–173; the sequence is TTTTTTTTTT. Positions 174-196 are enriched in polar residues; the sequence is AVEQQGAEQQDTNLNSTSSPTMM. A compositionally biased stretch (low complexity) spans 221–230; sequence SPISSSLNNS. Residues 231–257 are compositionally biased toward polar residues; it reads QDNTKPVSPDNIENTSNPMDTSSSNGK. Over residues 258–372 the composition is skewed to low complexity; the sequence is TPTITPIVTP…GGKTNPTGKK (115 aa). Positions 371 to 426 constitute an HTH myb-type domain; sequence KKTSLKQGWTKEEHIRFLNGIQIHGKGAWKEIAQFVGTRTPTQIQSHAQKYYLRQK. Residues 399-422 constitute a DNA-binding region (H-T-H motif); the sequence is WKEIAQFVGTRTPTQIQSHAQKYY. Over residues 445–454 the composition is skewed to low complexity; that stretch reads DDNLNNSNKN. The disordered stretch occupies residues 445-623; the sequence is DDNLNNSNKN…GNILRHQNSH (179 aa). A compositionally biased stretch (basic and acidic residues) spans 455–468; sequence NVDKNKQDDKEKKT. Basic residues predominate over residues 469 to 478; it reads QKTKKTKSKS. Composition is skewed to low complexity over residues 489–543 and 574–615; these read QQQQ…SSQT and NNNN…NEGN.

It localises to the nucleus. The polypeptide is Myb-like protein J (mybJ) (Dictyostelium discoideum (Social amoeba)).